We begin with the raw amino-acid sequence, 82 residues long: Penaeidin-3i (82 aa).

Residues 1–19 (MRLVVCLVFLASFALVCQG) form the signal peptide. The residue at position 20 (Q20) is a Pyrrolidone carboxylic acid. 2 disulfide bridges follow: C55–C73 and C67–C74. Position 81 is a serine amide (S81).

This sequence belongs to the penaeidin family.

Its subcellular location is the cytoplasmic granule. Antibacterial and antifungal activity. Presents chitin-binding activity. This Penaeus vannamei (Whiteleg shrimp) protein is Penaeidin-3i.